Here is a 452-residue protein sequence, read N- to C-terminus: Cell division protein FtsZ (452 aa).

GTP contacts are provided by residues G24–N28, G111–G113, E142, R146, and D190.

This sequence belongs to the FtsZ family. Homodimer. Polymerizes to form a dynamic ring structure in a strictly GTP-dependent manner. Interacts directly with several other division proteins.

The protein resides in the cytoplasm. Functionally, essential cell division protein that forms a contractile ring structure (Z ring) at the future cell division site. The regulation of the ring assembly controls the timing and the location of cell division. One of the functions of the FtsZ ring is to recruit other cell division proteins to the septum to produce a new cell wall between the dividing cells. Binds GTP and shows GTPase activity. The protein is Cell division protein FtsZ of Rickettsia prowazekii (strain Madrid E).